A 101-amino-acid polypeptide reads, in one-letter code: MSDNDVAAKRLTKPKLERPKLYKVLLVNDDFTPREFVVMVLKAVFRMSEEAGYRVMMTAHKMGISVVVVCAKDVAETKAKEATDLGKEAGFPLLFTAEPEE.

Belongs to the ClpS family. Binds to the N-terminal domain of the chaperone ClpA.

Involved in the modulation of the specificity of the ClpAP-mediated ATP-dependent protein degradation. The sequence is that of ATP-dependent Clp protease adapter protein ClpS 2 from Rhizobium meliloti (strain 1021) (Ensifer meliloti).